A 124-amino-acid polypeptide reads, in one-letter code: Small ribosomal subunit protein uS12 (124 aa).

A 3-methylthioaspartic acid modification is found at Asp89.

It belongs to the universal ribosomal protein uS12 family. In terms of assembly, part of the 30S ribosomal subunit. Contacts proteins S8 and S17. May interact with IF1 in the 30S initiation complex.

In terms of biological role, with S4 and S5 plays an important role in translational accuracy. Its function is as follows. Interacts with and stabilizes bases of the 16S rRNA that are involved in tRNA selection in the A site and with the mRNA backbone. Located at the interface of the 30S and 50S subunits, it traverses the body of the 30S subunit contacting proteins on the other side and probably holding the rRNA structure together. The combined cluster of proteins S8, S12 and S17 appears to hold together the shoulder and platform of the 30S subunit. This Moorella thermoacetica (strain ATCC 39073 / JCM 9320) protein is Small ribosomal subunit protein uS12.